A 478-amino-acid polypeptide reads, in one-letter code: Solute carrier family 7 member 13 (478 aa).

Topologically, residues Met-1–Glu-14 are cytoplasmic. Residues Leu-15–Val-35 form a helical membrane-spanning segment. Topologically, residues Ser-36–Asn-47 are extracellular. A helical membrane pass occupies residues Val-48 to Cys-68. The Cytoplasmic segment spans residues Ser-69–Cys-89. A helical transmembrane segment spans residues Phe-90–Ile-110. Residues Ala-111 to Cys-129 are Extracellular-facing. The chain crosses the membrane as a helical span at residues Ser-130–Leu-150. The Cytoplasmic portion of the chain corresponds to Asn-151–Thr-163. The chain crosses the membrane as a helical span at residues Val-164–Leu-184. At Val-185 to Gln-208 the chain is on the extracellular side. A helical transmembrane segment spans residues Leu-209–Ile-229. Residues Ala-230–Arg-242 are Cytoplasmic-facing. A helical membrane pass occupies residues Cys-243–Leu-263. Topologically, residues Thr-264–Gln-288 are extracellular. A helical membrane pass occupies residues Phe-289–Val-309. Residues Leu-310 to Pro-338 are Cytoplasmic-facing. Residues Phe-339–Ile-359 traverse the membrane as a helical segment. Asp-360 is a topological domain (extracellular). Residues Leu-361 to Leu-381 form a helical membrane-spanning segment. At Lys-382–Lys-395 the chain is on the cytoplasmic side. A helical transmembrane segment spans residues Val-396 to Leu-416. Topologically, residues Val-417–His-423 are extracellular. The chain crosses the membrane as a helical span at residues Tyr-424–Phe-444. At Lys-445–Ser-478 the chain is on the cytoplasmic side.

This sequence belongs to the amino acid-polyamine-organocation (APC) superfamily. As to quaternary structure, disulfide-linked heterodimer composed of the catalytic light subunit SLC7A13 and the heavy subunit SLC3A1. Expressed in renal tubules in the outer stripe of the outer medulla and medullary ray (at protein level). Detected in male but not in female kidney.

The protein resides in the apical cell membrane. It carries out the reaction L-cystine(out) + L-aspartate(in) = L-cystine(in) + L-aspartate(out). It catalyses the reaction L-cystine(out) = L-cystine(in). The enzyme catalyses L-aspartate(in) + L-glutamate(out) = L-aspartate(out) + L-glutamate(in). The catalysed reaction is L-aspartate(in) + L-glutamine(out) = L-aspartate(out) + L-glutamine(in). It carries out the reaction L-aspartate(in) + L-methionine(out) = L-aspartate(out) + L-methionine(in). It catalyses the reaction L-leucine(out) + L-aspartate(in) = L-leucine(in) + L-aspartate(out). The enzyme catalyses L-valine(out) + L-aspartate(in) = L-valine(in) + L-aspartate(out). The catalysed reaction is L-aspartate(in) + L-phenylalanine(out) = L-aspartate(out) + L-phenylalanine(in). It carries out the reaction L-tyrosine(out) + L-aspartate(in) = L-tyrosine(in) + L-aspartate(out). It catalyses the reaction L-tryptophan(out) + L-aspartate(in) = L-tryptophan(in) + L-aspartate(out). Associates with SLC3A1/rBAT to form a functional heterodimeric complex that transports anionic and neutral amino acids across the apical plasma membrane of renal epithelium. Preferentially mediates exchange transport, but can also operate via facilitated diffusion. May act as a major transporter for L-cystine in late proximal tubules, ensuring its reabsorption from the luminal fluid in exchange for cytosolic L-glutamate or L-aspartate. The polypeptide is Solute carrier family 7 member 13 (Mus musculus (Mouse)).